The primary structure comprises 291 residues: Bifunctional protein FolD (291 aa).

Residues 171 to 173 and Ile239 each bind NADP(+); that span reads GVS.

The protein belongs to the tetrahydrofolate dehydrogenase/cyclohydrolase family. As to quaternary structure, homodimer.

The enzyme catalyses (6R)-5,10-methylene-5,6,7,8-tetrahydrofolate + NADP(+) = (6R)-5,10-methenyltetrahydrofolate + NADPH. The catalysed reaction is (6R)-5,10-methenyltetrahydrofolate + H2O = (6R)-10-formyltetrahydrofolate + H(+). The protein operates within one-carbon metabolism; tetrahydrofolate interconversion. Catalyzes the oxidation of 5,10-methylenetetrahydrofolate to 5,10-methenyltetrahydrofolate and then the hydrolysis of 5,10-methenyltetrahydrofolate to 10-formyltetrahydrofolate. This Xylella fastidiosa (strain Temecula1 / ATCC 700964) protein is Bifunctional protein FolD.